The primary structure comprises 239 residues: Purine nucleoside phosphorylase DeoD-type 1 (239 aa).

H5 contributes to the a purine D-ribonucleoside binding site. Residues G21, R25, R44, and R88–S91 contribute to the phosphate site. A purine D-ribonucleoside is bound by residues E180–E182 and S204–D205. D205 functions as the Proton donor in the catalytic mechanism.

It belongs to the PNP/UDP phosphorylase family. In terms of assembly, homohexamer; trimer of homodimers.

The catalysed reaction is a purine D-ribonucleoside + phosphate = a purine nucleobase + alpha-D-ribose 1-phosphate. The enzyme catalyses a purine 2'-deoxy-D-ribonucleoside + phosphate = a purine nucleobase + 2-deoxy-alpha-D-ribose 1-phosphate. In terms of biological role, catalyzes the reversible phosphorolytic breakdown of the N-glycosidic bond in the beta-(deoxy)ribonucleoside molecules, with the formation of the corresponding free purine bases and pentose-1-phosphate. This Vibrio parahaemolyticus serotype O3:K6 (strain RIMD 2210633) protein is Purine nucleoside phosphorylase DeoD-type 1.